Reading from the N-terminus, the 215-residue chain is Large ribosomal subunit protein uL16m (215 aa).

Residues 1–36 (MALQQYNKFPFFFSGILGPTRLNGLQMPPIQTMVRW) constitute a mitochondrion transit peptide.

Belongs to the universal ribosomal protein uL16 family. Component of the mitochondrial large ribosomal subunit (mt-LSU). Mature yeast 74S mitochondrial ribosomes consist of a small (37S) and a large (54S) subunit. The 37S small subunit contains a 15S ribosomal RNA (15S mt-rRNA) and at least 32 different proteins. The 54S large subunit contains a 21S rRNA (21S mt-rRNA) and at least 45 different proteins.

It is found in the mitochondrion. In terms of biological role, component of the mitochondrial ribosome (mitoribosome), a dedicated translation machinery responsible for the synthesis of mitochondrial genome-encoded proteins, including at least some of the essential transmembrane subunits of the mitochondrial respiratory chain. The mitoribosomes are attached to the mitochondrial inner membrane and translation products are cotranslationally integrated into the membrane. This Schizosaccharomyces pombe (strain 972 / ATCC 24843) (Fission yeast) protein is Large ribosomal subunit protein uL16m (mrpl16).